We begin with the raw amino-acid sequence, 890 residues long: MESAEIRRRWLSFYEERGHTVVPSASLIADDPTLLLVPAGMVPFKPYFLGEVKPPWPRATSVQKCVRTPDIEEVGKTTRHGTFFQMCGNFSFGDYFKEGAITYAWELLTTPQDKGGYGLDPERLWITVYLDDDEAETIWRDKIGVPAERIQRLGKKDNYWSMGVPGPCGPCSEINYDRGPEFGVEGGPAVNDERYVEIWNLVFMQYERGEGTSKDDFEILGDLPQKNIDTGLGMERLAMILQGVQNMYEIDTSMAVIQKATELTGVEYGAAHGSDVSLRVVTDHMRTSVMLIGDGVTPGNEGRGYVLRRIMRRAIRNMRLLGATGPVVKDLVDVVIAMMGQQYPELISDRQRIETVALAEEAAFLKTLKAGTNILDTAVTETKASGGQVLPGDKAFLLHDTWGFPIDLTLEMAAEQGLSVDEDGFRRLMKEQRERAKADAQSKKTGHADLGAYREIADAAGETDFIGYTQTEGESTIVGILVDGVSSPAATEGDEVEIVLDRTPFYAEGGGQIGDTGRIKVESGAIIEVRDCQKPVPGVYVHKGVVQVGEVTVGAKAQVSIDVRRRKAIARAHSATHLTHQALRDALGPTAAQAGSENQPGRFRFDFGSPSAVPTTVMTDVEQQINEVLARDLDVQAEVMSIDEAKKQGAIAEFGEKYGERVRVVTIGDFSKELCGGTHVHNTAQLGLVKLLGESSIGSGVRRIEALVGVDAYNFLAREHTVVAQIQELVKGRPEELPEKVSAMLGKLKDAEKEIERFRAEKVLQAAAGLVDSAKDVRGIALVTGQVPDGTTADDLRRLVLDVRGRIQGGRPAVVALFTTVGGKPLTVIATNEAARERGLKAGDLVRAAAKTLGGGGGGKPDVAQGGGQNPAAIGEAIDAVERLVTETAK.

Zn(2+) is bound by residues His573, His577, Cys675, and His679.

Belongs to the class-II aminoacyl-tRNA synthetase family. Zn(2+) is required as a cofactor.

The protein resides in the cytoplasm. It catalyses the reaction tRNA(Ala) + L-alanine + ATP = L-alanyl-tRNA(Ala) + AMP + diphosphate. Its function is as follows. Catalyzes the attachment of alanine to tRNA(Ala) in a two-step reaction: alanine is first activated by ATP to form Ala-AMP and then transferred to the acceptor end of tRNA(Ala). Also edits incorrectly charged Ser-tRNA(Ala) and Gly-tRNA(Ala) via its editing domain. The chain is Alanine--tRNA ligase from Streptomyces avermitilis (strain ATCC 31267 / DSM 46492 / JCM 5070 / NBRC 14893 / NCIMB 12804 / NRRL 8165 / MA-4680).